Consider the following 494-residue polypeptide: mRNA decay activator protein ZFP36L2 (494 aa).

At S57 the chain carries Phosphoserine. Positions 93–113 (GGPTSYGTLKEPSGGGGTALL) are disordered. S125 is modified (phosphoserine). The short motif at 153–158 (RYKTEL) is the RNA-binding element. C3H1-type zinc fingers lie at residues 153–181 (RYKT…HGFH) and 191–219 (KYKT…HNAD). Residues 170 to 211 (YGEKCQFAHGFHELRSLTRHPKYKTELCRTFHTIGFCPYGPR) form an RNA-binding region. T238 carries the phosphothreonine modification. Disordered stretches follow at residues 257-293 (SLSF…PPSC) and 397-494 (QQQQ…ISDD). Residues 406–415 (PAQPPAPPSA) show a composition bias toward pro residues. Composition is skewed to low complexity over residues 416-435 (TLPA…QLPR) and 459-478 (YLSG…PSLD). Residues S490 and S492 each carry the phosphoserine; by RPS6KA1 modification.

In terms of assembly, associates with the cytoplasmic CCR4-NOT deadenylase to trigger ARE-containing mRNA deadenylation and decay processes. Interacts with CNOT7; this interaction is inhibited in response to phorbol 12-myristate 13-acetate (PMA) treatment in a p38 MAPK-dependent manner. Interacts with CNOT6L. Phosphorylated by RPS6KA1 at Ser-490 and Ser-492 upon phorbol 12-myristate 13-acetate (PMA) treatment; this phosphorylation results in dissociation of the CCR4-NOT-deadenylase complex and induces p38 MAPK-mediated stabilization of the low-density lipoprotein (LDL) receptor (LDLR) mRNA. Phosphorylation occurs during early preadipocyte differentiation. As to expression, expressed mainly in the basal epidermal layer, weakly in the suprabasal epidermal layers. Expressed in epidermal keratinocytes (at protein level). Expressed in oocytes.

It localises to the nucleus. Its subcellular location is the cytoplasm. In terms of biological role, zinc-finger RNA-binding protein that destabilizes several cytoplasmic AU-rich element (ARE)-containing mRNA transcripts by promoting their poly(A) tail removal or deadenylation, and hence provide a mechanism for attenuating protein synthesis. Acts as a 3'-untranslated region (UTR) ARE mRNA-binding adapter protein to communicate signaling events to the mRNA decay machinery. Functions by recruiting the CCR4-NOT deadenylase complex and probably other components of the cytoplasmic RNA decay machinery to the bound ARE-containing mRNAs, and hence promotes ARE-mediated mRNA deadenylation and decay processes. Binds to 3'-UTR ARE of numerous mRNAs. Promotes ARE-containing mRNA decay of the low-density lipoprotein (LDL) receptor (LDLR) mRNA in response to phorbol 12-myristate 13-acetate (PMA) treatment in a p38 MAPK-dependent manner. Positively regulates early adipogenesis by promoting ARE-mediated mRNA decay of immediate early genes (IEGs). Plays a role in mature peripheral neuron integrity by promoting ARE-containing mRNA decay of the transcriptional repressor REST mRNA. Plays a role in ovulation and oocyte meiotic maturation by promoting ARE-mediated mRNA decay of the luteinizing hormone receptor LHCGR mRNA. Acts as a negative regulator of erythroid cell differentiation: promotes glucocorticoid-induced self-renewal of erythroid cells by binding mRNAs that are induced or highly expressed during terminal erythroid differentiation and promotes their degradation, preventing erythroid cell differentiation. In association with ZFP36L1 maintains quiescence on developing B lymphocytes by promoting ARE-mediated decay of several mRNAs encoding cell cycle regulators that help B cells progress through the cell cycle, and hence ensuring accurate variable-diversity-joining (VDJ) recombination process and functional immune cell formation. Together with ZFP36L1 is also necessary for thymocyte development and prevention of T-cell acute lymphoblastic leukemia (T-ALL) transformation by promoting ARE-mediated mRNA decay of the oncogenic transcription factor NOTCH1 mRNA. This is mRNA decay activator protein ZFP36L2 from Homo sapiens (Human).